Consider the following 1167-residue polypeptide: DNA-directed RNA polymerase subunit beta (1167 aa).

Positions 1 to 27 (MAVSPANQATAATTSAESRSEATGIPG) are disordered. A compositionally biased stretch (low complexity) spans 9 to 23 (ATAATTSAESRSEAT).

This sequence belongs to the RNA polymerase beta chain family. In terms of assembly, the RNAP catalytic core consists of 2 alpha, 1 beta, 1 beta' and 1 omega subunit. When a sigma factor is associated with the core the holoenzyme is formed, which can initiate transcription.

It catalyses the reaction RNA(n) + a ribonucleoside 5'-triphosphate = RNA(n+1) + diphosphate. Functionally, DNA-dependent RNA polymerase catalyzes the transcription of DNA into RNA using the four ribonucleoside triphosphates as substrates. The protein is DNA-directed RNA polymerase subunit beta of Amycolatopsis mediterranei (strain S699) (Nocardia mediterranei).